Consider the following 2136-residue polypeptide: U5 small nuclear ribonucleoprotein 200 kDa helicase (2136 aa).

S17 and S26 each carry phosphoserine. K46 participates in a covalent cross-link: Glycyl lysine isopeptide (Lys-Gly) (interchain with G-Cter in SUMO2). A disordered region spans residues 50 to 80; that stretch reads TRMGDKAQRTKPQMQEERRAKRRKRDEDRHD. Residues 54-84 adopt a coiled-coil conformation; it reads DKAQRTKPQMQEERRAKRRKRDEDRHDINKM. S225 is subject to Phosphoserine. A Phosphothreonine modification is found at T389. Residues 395 to 2129 are interaction with C9orf78 and WBP4; it reads DLDQGGEALA…YKFSVDVKEA (1735 aa). In terms of domain architecture, Helicase ATP-binding 1 spans 490-673; the sequence is RAALETDENL…FLRVDPAKGL (184 aa). ATP is bound at residue 503–510; it reads APTGAGKT. The DEIH box motif lies at 615–618; the sequence is DEIH. The region spanning 684–921 is the Helicase C-terminal 1 domain; it reads PLEQTYVGIT…NAKDAVNWLG (238 aa). Y709 is modified (phosphotyrosine). Position 971 is an N6-acetyllysine (K971). Residues 981–1286 enclose the SEC63 1 domain; sequence VTELGRIASH…SCETQLPVSF (306 aa). The interaction with TSSC4 stretch occupies residues 1282 to 2136; it reads LPVSFRHLIL…KEAETDSDSD (855 aa). The region spanning 1337-1512 is the Helicase ATP-binding 2 domain; that stretch reads NTVYNSDDNV…WLGCSATSTF (176 aa). Residue 1350 to 1357 coordinates ATP; it reads APTGSGKT. A Phosphothreonine modification is found at T1428. Positions 1454-1457 match the DEVH box motif; the sequence is DEVH. A Helicase C-terminal 2 domain is found at 1545–1753; that stretch reads PVYHAITKHS…TIENKQDAVD (209 aa). Phosphothreonine is present on T1765. The region spanning 1812–2124 is the SEC63 2 domain; that stretch reads PLNLGMIAAY…GCDQEYKFSV (313 aa). S2002 carries the phosphoserine modification. Position 2131 is a phosphothreonine (T2131). Phosphoserine occurs at positions 2133 and 2135.

The protein belongs to the helicase family. SKI2 subfamily. In terms of assembly, component of a core complex containing at least PRPF8, SNRNP200, EFTUD2 and SNRNP40. Component of the U5 snRNP and U4/U6-U5 tri-snRNP complexes, building blocks of the spliceosome. Component of the U4/U6-U5 tri-snRNP complex composed of the U4, U6 and U5 snRNAs and at least PRPF3, PRPF4, PRPF6, PRPF8, PRPF31, SNRNP200, TXNL4A, SNRNP40, DDX23, CD2BP2, PPIH, SNU13, EFTUD2, SART1 and USP39. Component of precatalytic, catalytic and postcatalytic spliceosomal complexes. Component of the minor spliceosome, which splices U12-type introns. Interacts with C9orf78; the interaction is direct and mutually exclusive with its interaction with WBP4. Interacts with WBP4; the interaction is mutually exclusive with its interaction with C9orf78. Interacts with PRPF8. Interacts with TSSC4; the interaction is direct, excludes recruitment of C9ORF78 and WBP4 to SNRNP200 and negatively regulates its RNA helicase activity. Widely expressed.

The protein localises to the nucleus. It catalyses the reaction ATP + H2O = ADP + phosphate + H(+). Its function is as follows. Catalyzes the ATP-dependent unwinding of U4/U6 RNA duplices, an essential step in the assembly of a catalytically active spliceosome. Plays a role in pre-mRNA splicing as a core component of precatalytic, catalytic and postcatalytic spliceosomal complexes. As a component of the minor spliceosome, involved in the splicing of U12-type introns in pre-mRNAs. Involved in spliceosome assembly, activation and disassembly. Mediates changes in the dynamic network of RNA-RNA interactions in the spliceosome. The chain is U5 small nuclear ribonucleoprotein 200 kDa helicase (SNRNP200) from Homo sapiens (Human).